Consider the following 134-residue polypeptide: MEFVMKQALGGATKDMGKMLGGDEEKDPDAAKKEEERQEALRQEEEERKAKYAKMEAEREAVRQGIRDKYGIKKKEEREAEAQAALEANSEGSLTRPKKAIPPGCGDAAEEEDESILDTVIKYLPGPLQDIFKK.

The tract at residues 1-112 is disordered; it reads MEFVMKQALG…PGCGDAAEEE (112 aa). Basic and acidic residues predominate over residues 15–81; it reads DMGKMLGGDE…IKKKEEREAE (67 aa). A coiled-coil region spans residues 29–69; that stretch reads DAAKKEEERQEALRQEEEERKAKYAKMEAEREAVRQGIRDK. The interaction with the SNARE complex stretch occupies residues 48 to 70; the sequence is RKAKYAKMEAEREAVRQGIRDKY.

The protein belongs to the complexin/synaphin family. In terms of assembly, binds to the SNARE core complex containing SNAP25, VAMP2 and STX1A.

It localises to the cytoplasm. The protein resides in the cytosol. The protein localises to the perikaryon. It is found in the presynapse. Functionally, positively regulates a late step in synaptic vesicle exocytosis. Organizes the SNAREs into a cross-linked zigzag topology that, when interposed between the vesicle and plasma membranes, is incompatible with fusion, thereby preventing SNAREs from releasing neurotransmitters until an action potential arrives at the synapse. Also involved in glucose-induced secretion of insulin by pancreatic beta-cells. The chain is Complexin-1 (CPLX1) from Bos taurus (Bovine).